A 432-amino-acid polypeptide reads, in one-letter code: Enolase (432 aa).

Glutamine 167 serves as a coordination point for (2R)-2-phosphoglycerate. The active-site Proton donor is glutamate 209. Residues aspartate 246, glutamate 290, and aspartate 317 each coordinate Mg(2+). Residues lysine 342, arginine 371, serine 372, and lysine 393 each coordinate (2R)-2-phosphoglycerate. Lysine 342 functions as the Proton acceptor in the catalytic mechanism.

Belongs to the enolase family. In terms of assembly, component of the RNA degradosome, a multiprotein complex involved in RNA processing and mRNA degradation. Mg(2+) serves as cofactor.

It localises to the cytoplasm. It is found in the secreted. The protein resides in the cell surface. It catalyses the reaction (2R)-2-phosphoglycerate = phosphoenolpyruvate + H2O. It functions in the pathway carbohydrate degradation; glycolysis; pyruvate from D-glyceraldehyde 3-phosphate: step 4/5. Functionally, catalyzes the reversible conversion of 2-phosphoglycerate (2-PG) into phosphoenolpyruvate (PEP). It is essential for the degradation of carbohydrates via glycolysis. This Salmonella agona (strain SL483) protein is Enolase.